A 492-amino-acid polypeptide reads, in one-letter code: Catalase-1 (492 aa).

Active-site residues include His-65 and Asn-138. Residue Tyr-348 participates in heme binding.

Belongs to the catalase family. Homotetramer and heterotetramer. At least six or seven isozymes are produced from a mixture of 3 gene products. Interacts with NCA1. Interacts with LSD1. It depends on heme as a cofactor.

Its subcellular location is the cytoplasm. The catalysed reaction is 2 H2O2 = O2 + 2 H2O. In terms of biological role, occurs in almost all aerobically respiring organisms and serves to protect cells from the toxic effects of hydrogen peroxide. This is Catalase-1 (CAT1) from Arabidopsis thaliana (Mouse-ear cress).